Here is a 472-residue protein sequence, read N- to C-terminus: Ammonium transporter Rh type C (472 aa).

Over 1–9 (MAWNTNLRW) the chain is Cytoplasmic. Residues 10-30 (RLPLTCLLLEVVMVILFGVFV) form a helical membrane-spanning segment. The Extracellular portion of the chain corresponds to 31-51 (RYDFDADAHWWSWRTEFYYRY). Residues 52 to 72 (PSFQDVHVMVFVGFGFLMTFL) form a helical membrane-spanning segment. Residues 73-76 (QRYG) lie on the Cytoplasmic side of the membrane. Residues 77–97 (FSAVGFNFLLAAFGIQWALLM) form a helical membrane-spanning segment. The Extracellular segment spans residues 98 to 114 (QGWFHFLQGRYIVVGVE). Residues 115-135 (NLINADFCVASVCVAFGAVLG) form a helical membrane-spanning segment. The Cytoplasmic segment spans residues 136-139 (KVSP). Residues 140 to 160 (IQLLIMTFFQVTLFAVNEFIL) form a helical membrane-spanning segment. The Extracellular segment spans residues 161–168 (LNLLKVKD). Residues 169–191 (AGGSMTIHTFGAYFGLTVTRILY) traverse the membrane as a helical segment. Topologically, residues 192–209 (RRNLEQSKERQNSVYQSD) are cytoplasmic. A helical transmembrane segment spans residues 210–230 (LFAMIGTLFLWMYWPSFNSAI). Residues 231–241 (SYHGDSQHRAA) are Extracellular-facing. Residues 242-262 (INTYCSLAACVLTSVAISSAL) form a helical membrane-spanning segment. Residues 263–294 (HKKGKLDMVHIQNATPAGGVAVGTAAEMMLMP) lie on the Cytoplasmic side of the membrane. A helical transmembrane segment spans residues 295–315 (YGALIVGFVCGIISTLGFVYL). The Extracellular portion of the chain corresponds to 316–336 (TPFLESRLHIQDTCGINNLHG). Residues 337–357 (IPGIIGGIVGAVTAASASLEV) traverse the membrane as a helical segment. The Cytoplasmic segment spans residues 358–388 (YGKEGLVHSFDFQGFKRDWTARTQGKFQIYG). A helical transmembrane segment spans residues 389–409 (LLVTLAMALMGGIIVGVGLIL). Over 410–450 (RLPFWGQPSDENCFEDAVYWEMPEGNSTVYIPEDPTFKPSG) the chain is Extracellular. N-linked (GlcNAc...) asparagine glycosylation is present at Asn435. A helical transmembrane segment spans residues 451–471 (PSVPSVPMVSPLPMASSVPLV). Pro472 is a topological domain (cytoplasmic).

The protein belongs to the ammonium transporter (TC 2.A.49) family. Rh subfamily. In terms of assembly, homotrimer. Post-translationally, N-glycosylated.

The protein localises to the cell membrane. Its subcellular location is the apical cell membrane. The catalysed reaction is NH4(+)(in) = NH4(+)(out). The enzyme catalyses methylamine(out) = methylamine(in). It carries out the reaction CO2(out) = CO2(in). Its function is as follows. Ammonium transporter involved in the maintenance of acid-base homeostasis. Transports ammonium and its related derivative methylammonium across the plasma membrane of epithelial cells likely contributing to renal transepithelial ammonia transport and ammonia metabolism. Postulated to primarily mediate an electroneutral bidirectional transport of NH3 ammonia species according to a mechanism that implies interaction of an NH4(+) ion with acidic residues of the pore entry followed by dissociation of NH4(+) into NH3 and H(+). As a result NH3 transits through the central pore and is protonated on the extracellular side reforming NH4(+). May act as a CO2 channel providing for renal acid secretion. The protein is Ammonium transporter Rh type C (RHCG) of Pongo abelii (Sumatran orangutan).